A 154-amino-acid polypeptide reads, in one-letter code: MGSLSGLRLAAGSCFRLCERDVSSSLRLTRSSDLKRINGFCTKPQESPGAPSRTYNRVPLHKPTDWQKKILIWSGRFKKEDEIPETVSLEMLDAAKNKMRVKISYLMIALTVVGCIFMVIEGKKAAQRHETLTSLNLEKKARLKEEAAMKAKTE.

Residues 76 to 102 form a required for proapoptotic activity region; it reads RFKKEDEIPETVSLEMLDAAKNKMRVK. A helical transmembrane segment spans residues 103 to 120; that stretch reads ISYLMIALTVVGCIFMVI.

This sequence belongs to the UPF0389 family. Interacts with HSP90AB1; HSP90AB1 is essential for FAM162A mitochondrial localization and pro-apoptotic activity. Interacts with VDAC2; the interaction is probably involved in inducing mitochondrial permeability transition.

The protein resides in the mitochondrion membrane. Proposed to be involved in regulation of apoptosis; the exact mechanism may differ between cell types/tissues. May be involved in hypoxia-induced cell death of transformed cells implicating cytochrome C release and caspase activation (such as CASP9) and inducing mitochondrial permeability transition. May be involved in hypoxia-induced cell death of neuronal cells probably by promoting release of AIFM1 from mitochondria to cytoplasm and its translocation to the nucleus; however, the involvement of caspases has been reported conflictingly. The sequence is that of Protein FAM162A (FAM162A) from Homo sapiens (Human).